The following is a 236-amino-acid chain: Alpha-tubulin N-acetyltransferase (236 aa).

In terms of domain architecture, N-acetyltransferase spans 21–201 (ASVPDGVSRW…NKFVVFHGFF (181 aa)). Acetyl-CoA is bound by residues 134-147 (FYVD…GYGK) and 171-180 (SDKLLGFMKK). Residues 217–236 (SPTGAAAAATGTKAKNEMPG) form a disordered region. Residues 219–229 (TGAAAAATGTK) are compositionally biased toward low complexity.

This sequence belongs to the acetyltransferase ATAT1 family.

It carries out the reaction L-lysyl-[alpha-tubulin] + acetyl-CoA = N(6)-acetyl-L-lysyl-[alpha-tubulin] + CoA + H(+). Functionally, specifically acetylates 'Lys-40' in alpha-tubulin on the lumenal side of microtubules. Promotes microtubule destabilization and accelerates microtubule dynamics; this activity may be independent of acetylation activity. Acetylates alpha-tubulin with a slow enzymatic rate, due to a catalytic site that is not optimized for acetyl transfer. Enters the microtubule through each end and diffuses quickly throughout the lumen of microtubules. Acetylates only long/old microtubules because of its slow acetylation rate since it does not have time to act on dynamically unstable microtubules before the enzyme is released. In Leishmania braziliensis, this protein is Alpha-tubulin N-acetyltransferase.